The primary structure comprises 84 residues: Cell division topological specificity factor (84 aa).

The protein belongs to the MinE family.

Its function is as follows. Prevents the cell division inhibition by proteins MinC and MinD at internal division sites while permitting inhibition at polar sites. This ensures cell division at the proper site by restricting the formation of a division septum at the midpoint of the long axis of the cell. This chain is Cell division topological specificity factor, found in Burkholderia mallei (strain NCTC 10247).